The following is a 170-amino-acid chain: Adenine phosphoribosyltransferase (170 aa).

Belongs to the purine/pyrimidine phosphoribosyltransferase family. Homodimer.

The protein localises to the cytoplasm. It catalyses the reaction AMP + diphosphate = 5-phospho-alpha-D-ribose 1-diphosphate + adenine. It participates in purine metabolism; AMP biosynthesis via salvage pathway; AMP from adenine: step 1/1. In terms of biological role, catalyzes a salvage reaction resulting in the formation of AMP, that is energically less costly than de novo synthesis. In Pseudothermotoga lettingae (strain ATCC BAA-301 / DSM 14385 / NBRC 107922 / TMO) (Thermotoga lettingae), this protein is Adenine phosphoribosyltransferase.